The following is a 280-amino-acid chain: uncharacterized protein (280 aa).

The next 6 helical transmembrane spans lie at 46-66 (LIFL…FVCT), 81-101 (IACS…FLIP), 114-134 (FFYL…SWVV), 137-157 (VWHF…IKLQ), 170-190 (ILFI…LLEL), and 225-245 (IVAC…ALIV). The interval 258 to 280 (ESGSIEKKNKSSPPPRTWQSNYQ) is disordered.

It belongs to the TatC family.

The protein resides in the mitochondrion membrane. This is an uncharacterized protein from Arabidopsis thaliana (Mouse-ear cress).